Reading from the N-terminus, the 463-residue chain is ATP synthase subunit beta (463 aa).

151–158 provides a ligand contact to ATP; it reads GGAGVGKT.

Belongs to the ATPase alpha/beta chains family. As to quaternary structure, F-type ATPases have 2 components, CF(1) - the catalytic core - and CF(0) - the membrane proton channel. CF(1) has five subunits: alpha(3), beta(3), gamma(1), delta(1), epsilon(1). CF(0) has three main subunits: a(1), b(2) and c(9-12). The alpha and beta chains form an alternating ring which encloses part of the gamma chain. CF(1) is attached to CF(0) by a central stalk formed by the gamma and epsilon chains, while a peripheral stalk is formed by the delta and b chains.

Its subcellular location is the cell membrane. The enzyme catalyses ATP + H2O + 4 H(+)(in) = ADP + phosphate + 5 H(+)(out). Its function is as follows. Produces ATP from ADP in the presence of a proton gradient across the membrane. The catalytic sites are hosted primarily by the beta subunits. The protein is ATP synthase subunit beta of Clostridium botulinum (strain ATCC 19397 / Type A).